We begin with the raw amino-acid sequence, 320 residues long: Methionyl-tRNA formyltransferase (320 aa).

Position 111–114 (111–114 (SLLP)) interacts with (6S)-5,6,7,8-tetrahydrofolate.

Belongs to the Fmt family.

The catalysed reaction is L-methionyl-tRNA(fMet) + (6R)-10-formyltetrahydrofolate = N-formyl-L-methionyl-tRNA(fMet) + (6S)-5,6,7,8-tetrahydrofolate + H(+). Its function is as follows. Attaches a formyl group to the free amino group of methionyl-tRNA(fMet). The formyl group appears to play a dual role in the initiator identity of N-formylmethionyl-tRNA by promoting its recognition by IF2 and preventing the misappropriation of this tRNA by the elongation apparatus. This Bifidobacterium adolescentis (strain ATCC 15703 / DSM 20083 / NCTC 11814 / E194a) protein is Methionyl-tRNA formyltransferase.